The chain runs to 375 residues: tRNA-specific 2-thiouridylase MnmA (375 aa).

ATP contacts are provided by residues 7 to 14 (GLSGGVDS) and Met-33. An interaction with target base in tRNA region spans residues 102–104 (NPD). Catalysis depends on Cys-107, which acts as the Nucleophile. A disulfide bridge links Cys-107 with Cys-205. Gly-132 is an ATP binding site. Positions 155 to 157 (KDQ) are interaction with tRNA. The Cysteine persulfide intermediate role is filled by Cys-205. An interaction with tRNA region spans residues 313-314 (RY).

This sequence belongs to the MnmA/TRMU family.

The protein resides in the cytoplasm. It catalyses the reaction S-sulfanyl-L-cysteinyl-[protein] + uridine(34) in tRNA + AH2 + ATP = 2-thiouridine(34) in tRNA + L-cysteinyl-[protein] + A + AMP + diphosphate + H(+). In terms of biological role, catalyzes the 2-thiolation of uridine at the wobble position (U34) of tRNA, leading to the formation of s(2)U34. The sequence is that of tRNA-specific 2-thiouridylase MnmA from Phytoplasma australiense.